The primary structure comprises 396 residues: S-adenosylmethionine synthase (396 aa).

His16 is an ATP binding site. Residue Asp18 coordinates Mg(2+). Glu44 is a binding site for K(+). The L-methionine site is built by Glu57 and Gln100. Residues 100–110 form a flexible loop region; that stretch reads QSVDINQGVDR. ATP-binding positions include 165–167, 231–232, Asp240, 246–247, Ala263, and Lys267; these read DAK, KF, and RK. Asp240 provides a ligand contact to L-methionine. Lys271 lines the L-methionine pocket.

The protein belongs to the AdoMet synthase family. As to quaternary structure, homotetramer; dimer of dimers. Mg(2+) is required as a cofactor. It depends on K(+) as a cofactor.

The protein localises to the cytoplasm. The enzyme catalyses L-methionine + ATP + H2O = S-adenosyl-L-methionine + phosphate + diphosphate. It participates in amino-acid biosynthesis; S-adenosyl-L-methionine biosynthesis; S-adenosyl-L-methionine from L-methionine: step 1/1. In terms of biological role, catalyzes the formation of S-adenosylmethionine (AdoMet) from methionine and ATP. The overall synthetic reaction is composed of two sequential steps, AdoMet formation and the subsequent tripolyphosphate hydrolysis which occurs prior to release of AdoMet from the enzyme. The protein is S-adenosylmethionine synthase of Azotobacter vinelandii (strain DJ / ATCC BAA-1303).